Here is an 830-residue protein sequence, read N- to C-terminus: DNA replication licensing factor MCM6 (830 aa).

A C4-type zinc finger spans residues 159-186 (CLDCGNVVKNVEQQFKYTEPIICVNATC). One can recognise an MCM domain in the interval 349 to 555 (FFNKIVDSIC…NTDYHIAHHI (207 aa)). Residue 399–406 (GDPSCAKS) coordinates ATP. Residues 531–534 (SRFD) carry the Arginine finger motif. Positions 671–710 (DFQDADDGTNVPADNDAGQPTEMDAAPQQDGPENEQAADT) are disordered.

Belongs to the MCM family. As to quaternary structure, component of the minichromosome maintenance (MCM) complex, a heterotetramer composed of MCM2, MCM3, MCM4, MCM5, MCM6 and MCM7.

It localises to the nucleus. The catalysed reaction is ATP + H2O = ADP + phosphate + H(+). In terms of biological role, probable component of the MCM2-7 complex (MCM complex) that may function as a DNA helicase and which is essential to undergo a single round of replication initiation and elongation per cell cycle in eukaryotic cells. In Oryza sativa subsp. indica (Rice), this protein is DNA replication licensing factor MCM6 (MCM6).